The chain runs to 101 residues: Conopressin/conophysin, isoform 3 (101 aa).

A signal peptide is located at residue Ala1. Residues Cys2 and Cys7 are joined by a disulfide bond. Position 10 is a glycine amide (Gly10). The propeptide occupies 11–18 (GKRNVDEG). 7 disulfides stabilise this stretch: Cys23–Cys63, Cys26–Cys37, Cys31–Cys53, Cys38–Cys43, Cys70–Cys88, Cys82–Cys100, and Cys89–Cys94.

Belongs to the vasopressin/oxytocin family. In terms of tissue distribution, expressed by the venom gland.

Its subcellular location is the secreted. Targets vasopressin-oxytocin related receptors. Is more active on fish receptors than on their human counterparts, supporting an evolved role of this conopressin in the envenomation process. Acts as an agonist on zebrafish vasopressin receptors V1a1R (EC(50)=10.6 nM), V1a2R (EC(50)=44.06 nM, partial agonist), V2R (EC(50)=299.2 nM) and oxytocin receptor (EC(50)=353.73 nM, partial agonist). Shows a weaker activity on human receptors AVPR1B (EC(50)=51.92 nM), AVPR1A (EC(50)=123.78 nM), AVPR2 (EC(50)=299.2 nM) and oxytocin (OXTR) receptor (EC(50)=455.66 nM, partial agonist). In vivo, exhibits grooming and scratching behavior in mice, following intracerebral injection. The sequence is that of Conopressin/conophysin, isoform 3 from Conus monile (Necklace cone).